Here is a 210-residue protein sequence, read N- to C-terminus: Frataxin, mitochondrial (210 aa).

The transit peptide at 1 to 41 (MWTFGRRAVAGLLASPSPAQAQTLARAPRLAELAQLCSRRG) directs the protein to the mitochondrion.

Belongs to the frataxin family. As to quaternary structure, component of the mitochondrial core iron-sulfur cluster (ISC) complex composed of NFS1, LYRM4, NDUFAB1, ISCU, FXN, and FDX2; this complex is a heterohexamer containing two copies of each monomer. Homodimer. Monomer (probable predominant form). Oligomer. Monomers and polymeric aggregates of &gt;1 MDa have been isolated from mitochondria. A small fraction of heterologous overexpressed recombinant frataxin forms high-molecular weight aggregates that incorporate iron. Interacts with LYRM4. Interacts (via ferrous form) with ISCU; the interaction is possible when both are bound to the dimeric form of the cysteine desulfurase complex (NFS1:LYRM4) and the interaction enhances FXN interaction to the dimeric form of the cysteine desulfurase complex (NFS1:LYRM4). Interacts with FECH; one iron-bound FXN monomer seems to interact with a FECH homodimer. Interacts with SDHA and SDHB. Interacts with ACO2; the interaction is dependent on citrate. Interacts with HSPA9. Interacts with ACO1. Interacts with ISCU (cytoplasmic form). Processed in two steps by mitochondrial processing peptidase (MPP). MPP first cleaves the precursor to intermediate form and subsequently converts the intermediate to yield frataxin mature form (frataxin(81-210)) which is the predominant form. The additional forms, frataxin(56-210) and frataxin(78-210), seem to be produced when the normal maturation process is impaired; their physiological relevance is unsure.

It is found in the mitochondrion. The protein localises to the cytoplasm. Its subcellular location is the cytosol. It carries out the reaction 4 Fe(2+) + O2 + 4 H(+) = 4 Fe(3+) + 2 H2O. Its function is as follows. Functions as an activator of persulfide transfer to the scaffoding protein ISCU as component of the core iron-sulfur cluster (ISC) assembly complex and participates to the [2Fe-2S] cluster assembly. Accelerates sulfur transfer from NFS1 persulfide intermediate to ISCU and to small thiols such as L-cysteine and glutathione leading to persulfuration of these thiols and ultimately sulfide release. Binds ferrous ion and is released from FXN upon the addition of both L-cysteine and reduced FDX2 during [2Fe-2S] cluster assembly. The core iron-sulfur cluster (ISC) assembly complex is involved in the de novo synthesis of a [2Fe-2S] cluster, the first step of the mitochondrial iron-sulfur protein biogenesis. This process is initiated by the cysteine desulfurase complex (NFS1:LYRM4:NDUFAB1) that produces persulfide which is delivered on the scaffold protein ISCU in a FXN-dependent manner. Then this complex is stabilized by FDX2 which provides reducing equivalents to accomplish the [2Fe-2S] cluster assembly. Finally, the [2Fe-2S] cluster is transferred from ISCU to chaperone proteins, including HSCB, HSPA9 and GLRX5. May play a role in the protection against iron-catalyzed oxidative stress through its ability to catalyze the oxidation of Fe(2+) to Fe(3+); the oligomeric form but not the monomeric form has in vitro ferroxidase activity. May be able to store large amounts of iron in the form of a ferrihydrite mineral by oligomerization; however, the physiological relevance is unsure as reports are conflicting and the function has only been shown using heterologous overexpression systems. May function as an iron chaperone protein that protects the aconitase [4Fe-4S]2+ cluster from disassembly and promotes enzyme reactivation. May play a role as a high affinity iron binding partner for FECH that is capable of both delivering iron to ferrochelatase and mediating the terminal step in mitochondrial heme biosynthesis. Modulates the RNA-binding activity of ACO1. May be involved in the cytoplasmic iron-sulfur protein biogenesis. May contribute to oxidative stress resistance and overall cell survival. This chain is Frataxin, mitochondrial, found in Macaca fascicularis (Crab-eating macaque).